A 647-amino-acid chain; its full sequence is DNA mismatch repair protein MutL (647 aa).

Residues 377-396 (EEPQAVKQSAQLWQPPKQEW) are disordered. Residues 387–396 (QLWQPPKQEW) show a composition bias toward low complexity.

This sequence belongs to the DNA mismatch repair MutL/HexB family.

This protein is involved in the repair of mismatches in DNA. It is required for dam-dependent methyl-directed DNA mismatch repair. May act as a 'molecular matchmaker', a protein that promotes the formation of a stable complex between two or more DNA-binding proteins in an ATP-dependent manner without itself being part of a final effector complex. The chain is DNA mismatch repair protein MutL from Bacillus cereus (strain AH187).